The following is a 327-amino-acid chain: Interleukin-12 subunit beta (327 aa).

A signal peptide spans 1-22; it reads MCHQKLTISWFAMVLLVSPLMA. The region spanning 23–106 is the Ig-like C2-type domain; that stretch reads IWELEKDVYV…LSHSRLLLHK (84 aa). Cys-50 and Cys-90 are oxidised to a cystine. N-linked (GlcNAc...) asparagine glycans are attached at residues Asn-125, Asn-135, Asn-223, and Asn-315. Positions 238 to 327 constitute a Fibronectin type-III domain; that stretch reads PPKNLQLKPL…WSEWASVSCN (90 aa).

The protein belongs to the IL-12B family. In terms of assembly, heterodimer with IL12A; disulfide-linked. The heterodimer is known as interleukin IL-12. Heterodimer with IL23A; disulfide-linked. The heterodimer is known as interleukin IL-23. Also secreted as a monomer. Interacts with NBR1; this interaction promotes IL-12 secretion.

The protein localises to the secreted. In terms of biological role, cytokine that can act as a growth factor for activated T and NK cells, enhance the lytic activity of NK/lymphokine-activated killer cells, and stimulate the production of IFN-gamma by resting PBMC. Associates with IL23A to form the IL-23 interleukin, a heterodimeric cytokine which functions in innate and adaptive immunity. IL-23 may constitute with IL-17 an acute response to infection in peripheral tissues. IL-23 binds to a heterodimeric receptor complex composed of IL12RB1 and IL23R, activates the Jak-Stat signaling cascade, stimulates memory rather than naive T-cells and promotes production of pro-inflammatory cytokines. IL-23 induces autoimmune inflammation and thus may be responsible for autoimmune inflammatory diseases and may be important for tumorigenesis. This is Interleukin-12 subunit beta (IL12B) from Sigmodon hispidus (Hispid cotton rat).